Reading from the N-terminus, the 139-residue chain is Phosphoribosyl-AMP cyclohydrolase (139 aa).

Aspartate 91 contributes to the Mg(2+) binding site. Cysteine 92 is a Zn(2+) binding site. Mg(2+) is bound by residues aspartate 93 and aspartate 95. Positions 110 and 117 each coordinate Zn(2+).

It belongs to the PRA-CH family. Homodimer. Mg(2+) serves as cofactor. It depends on Zn(2+) as a cofactor.

The protein resides in the cytoplasm. It catalyses the reaction 1-(5-phospho-beta-D-ribosyl)-5'-AMP + H2O = 1-(5-phospho-beta-D-ribosyl)-5-[(5-phospho-beta-D-ribosylamino)methylideneamino]imidazole-4-carboxamide. The protein operates within amino-acid biosynthesis; L-histidine biosynthesis; L-histidine from 5-phospho-alpha-D-ribose 1-diphosphate: step 3/9. In terms of biological role, catalyzes the hydrolysis of the adenine ring of phosphoribosyl-AMP. This chain is Phosphoribosyl-AMP cyclohydrolase, found in Brucella canis (strain ATCC 23365 / NCTC 10854 / RM-666).